The sequence spans 324 residues: MTVRTAAEPPNRIEVDMDAPSLDTDSSCTSLSSSVQRYEYKHGRRYHGYHAGSYPFPNDKREQDRLDMIHHLYTRILNDRLFLAPLDPRGKAILDIGTGTGIWALHMGDAHPAARLIVGNDLSPIQPSWAPANVRFVVDDVEKDWVDRHPYDFIHCRYMAGSIKDWPRLIRQCYAHLRPGGWLELQESVNVMYSEDGTLPPDSFMARMMHGLIVACEKIGRTMDPAPSMEKWVQEAGFDPITKHRFKIPVGSWPKDPRLKECGSLMRVNFVEGVEAFTASLFTEVLGWTPEEVAVLNTGVREEAMRNDIHAIFDFVVIVAQKPY.

A disordered region spans residues 1 to 28 (MTVRTAAEPPNRIEVDMDAPSLDTDSSC).

It belongs to the methyltransferase superfamily. LaeA methyltransferase family.

It functions in the pathway secondary metabolite biosynthesis. In terms of biological role, methyltransferase; part of the gene cluster that mediates the biosynthesis of pyranterreones, a family of antioxidative compounds. The first step of pyranonigrins biosynthesis is performed by the hybrid PKS-NRPS synthetase pytA that condenses 4 malonyl-CoA units ato the acetyl starter unit by the modular PKS of pytA. The acyl chain is then connected to an L-serine through the amide bond by the modular NRPS of pytA. A tetramic acid is formed and released from the PKS-NRPS pytA to give pyranterreone 5 with the help of the thioesterase pytI. Pyranterreone 5 could be methylated by pytC to afford pyranterreone 6. Both pyranterreones 5 and 6 are subsequently oxidized by the FAD-linked oxidoreductase pytB and the cytochrome P450 monooxygenase pytD to form the fused gamma-pyrone core, resulting in pyranterreones 7 and 11, respectively. The hydroxy group at C-8 of pyranterreones 7 and 11 are dehydrated by the aspartyl protease pytH to form a delta-7 double bond to give pyranterreones 3 and 1, 2 accordingly. The exo-methylene of pyranterreone 3 could be reduced into a pendant methyl by reductase pytE to provide pyranterreone 4, also known as cordylactam. Pyranterreone 4 can be reconverted to pyranterreone 3 through pytB-catalyzed dehydrogenation or further oxidized to pyranterreones 9 and 10. This chain is Methyltransferase pytC, found in Aspergillus terreus.